Here is a 468-residue protein sequence, read N- to C-terminus: Glutamate--tRNA ligase (468 aa).

A 'HIGH' region motif is present at residues 12–22 (PSPTGMMHIGT). A 'KMSKS' region motif is present at residues 238-242 (KLSKR). ATP is bound at residue lysine 241.

It belongs to the class-I aminoacyl-tRNA synthetase family. Glutamate--tRNA ligase type 1 subfamily. In terms of assembly, monomer.

It is found in the cytoplasm. It catalyses the reaction tRNA(Glu) + L-glutamate + ATP = L-glutamyl-tRNA(Glu) + AMP + diphosphate. Catalyzes the attachment of glutamate to tRNA(Glu) in a two-step reaction: glutamate is first activated by ATP to form Glu-AMP and then transferred to the acceptor end of tRNA(Glu). The chain is Glutamate--tRNA ligase from Phenylobacterium zucineum (strain HLK1).